We begin with the raw amino-acid sequence, 686 residues long: Probable serine/threonine-protein kinase pdkA (686 aa).

Residues M1–T31 are disordered. A compositionally biased stretch (low complexity) spans P18–T31. Positions F69–F449 constitute a Protein kinase domain. Residues S79–G81 and K98 contribute to the ATP site. Positions L100–Y144 are PIF-pocket. Residues E147 to C149 and D153 each bind ATP. D192 serves as the catalytic Proton acceptor. Residues E196 and D210 each contribute to the ATP site. 2 disordered regions span residues F211 to T321 and L481 to S584. A compositionally biased stretch (low complexity) spans S222–S257. The segment covering T258 to R267 has biased composition (polar residues). 3 stretches are compositionally biased toward low complexity: residues T268–S279, T288–T321, and N503–G568. Residues V593–S682 enclose the PH domain.

This sequence belongs to the protein kinase superfamily. AGC Ser/Thr protein kinase family. PDPK1 subfamily.

The catalysed reaction is L-seryl-[protein] + ATP = O-phospho-L-seryl-[protein] + ADP + H(+). It carries out the reaction L-threonyl-[protein] + ATP = O-phospho-L-threonyl-[protein] + ADP + H(+). The polypeptide is Probable serine/threonine-protein kinase pdkA (pdkA) (Dictyostelium discoideum (Social amoeba)).